The chain runs to 511 residues: GATA zinc finger domain-containing protein 15 (511 aa).

Positions 1 to 111 (TNNNNFNNIN…FNDNCNNNSN (111 aa)) are enriched in low complexity. 3 disordered regions span residues 1–194 (TNNN…NTFF), 214–313 (NVNN…NENK), and 325–355 (NLQY…VLSP). Residues 124 to 135 (SLQNINQYPLSP) show a composition bias toward polar residues. The segment covering 136–166 (NNNKSSNQHLSHSSSNVNSQYYQTPYYQPSQ) has biased composition (low complexity). Polar residues predominate over residues 167–185 (KQNSPNSTPPLNGCQYENH). Low complexity-rich tracts occupy residues 214 to 309 (NVNN…NNDN) and 337 to 351 (SGST…PTSP). A GATA-type zinc finger spans residues 453 to 478 (CQACGTRASPEWRKGPDGFKSLCNAC).

In Dictyostelium discoideum (Social amoeba), this protein is GATA zinc finger domain-containing protein 15 (gtaO).